Reading from the N-terminus, the 107-residue chain is Phosphoribosyl-ATP pyrophosphatase (107 aa).

Belongs to the PRA-PH family.

The protein resides in the cytoplasm. It carries out the reaction 1-(5-phospho-beta-D-ribosyl)-ATP + H2O = 1-(5-phospho-beta-D-ribosyl)-5'-AMP + diphosphate + H(+). It functions in the pathway amino-acid biosynthesis; L-histidine biosynthesis; L-histidine from 5-phospho-alpha-D-ribose 1-diphosphate: step 2/9. The polypeptide is Phosphoribosyl-ATP pyrophosphatase (Bacillus thuringiensis (strain Al Hakam)).